The sequence spans 212 residues: Imidazole glycerol phosphate synthase subunit HisH (212 aa).

The 212-residue stretch at Met1 to Ala212 folds into the Glutamine amidotransferase type-1 domain. Cys79 serves as the catalytic Nucleophile. Residues His187 and Glu189 contribute to the active site.

Heterodimer of HisH and HisF.

It localises to the cytoplasm. The enzyme catalyses 5-[(5-phospho-1-deoxy-D-ribulos-1-ylimino)methylamino]-1-(5-phospho-beta-D-ribosyl)imidazole-4-carboxamide + L-glutamine = D-erythro-1-(imidazol-4-yl)glycerol 3-phosphate + 5-amino-1-(5-phospho-beta-D-ribosyl)imidazole-4-carboxamide + L-glutamate + H(+). The catalysed reaction is L-glutamine + H2O = L-glutamate + NH4(+). Its pathway is amino-acid biosynthesis; L-histidine biosynthesis; L-histidine from 5-phospho-alpha-D-ribose 1-diphosphate: step 5/9. In terms of biological role, IGPS catalyzes the conversion of PRFAR and glutamine to IGP, AICAR and glutamate. The HisH subunit catalyzes the hydrolysis of glutamine to glutamate and ammonia as part of the synthesis of IGP and AICAR. The resulting ammonia molecule is channeled to the active site of HisF. The sequence is that of Imidazole glycerol phosphate synthase subunit HisH from Nitratidesulfovibrio vulgaris (strain DSM 19637 / Miyazaki F) (Desulfovibrio vulgaris).